A 132-amino-acid chain; its full sequence is Large ribosomal subunit protein uL14 (132 aa).

This sequence belongs to the universal ribosomal protein uL14 family. Part of the 50S ribosomal subunit. Forms a cluster with proteins L3 and L24e, part of which may contact the 16S rRNA in 2 intersubunit bridges.

Functionally, binds to 23S rRNA. Forms part of two intersubunit bridges in the 70S ribosome. The polypeptide is Large ribosomal subunit protein uL14 (Halobacterium salinarum (strain ATCC 29341 / DSM 671 / R1)).